The sequence spans 51 residues: 2,3,4,5-tetrahydropyridine-2,6-dicarboxylate N-succinyltransferase (51 aa).

Belongs to the transferase hexapeptide repeat family. In terms of assembly, homotrimer.

The protein localises to the cytoplasm. The enzyme catalyses (S)-2,3,4,5-tetrahydrodipicolinate + succinyl-CoA + H2O = (S)-2-succinylamino-6-oxoheptanedioate + CoA. It participates in amino-acid biosynthesis; L-lysine biosynthesis via DAP pathway; LL-2,6-diaminopimelate from (S)-tetrahydrodipicolinate (succinylase route): step 1/3. The sequence is that of 2,3,4,5-tetrahydropyridine-2,6-dicarboxylate N-succinyltransferase (dapD) from Klebsiella oxytoca.